The sequence spans 120 residues: Large ribosomal subunit protein bL19c (120 aa).

Belongs to the bacterial ribosomal protein bL19 family.

The protein resides in the plastid. It localises to the chloroplast. This chain is Large ribosomal subunit protein bL19c, found in Thalassiosira weissflogii (Marine diatom).